The following is a 563-amino-acid chain: MLLRSAALCRALLARRGRAAGLCRRCVSSLQVANEPVLAFTQGSPERDALQKALKELKGRTEAIPCVVGDEEVWTSDVRYQASPFNHGHKVAKFCYADKALLHRAIGAALAARKEWDLKPVADRAQVFLKAADLLSGPRRAEVLAKTMVGQGKTVIQAEIDAAAELIDFFRFNAKFAMELEGEQPLSVPPSTNSMLYRGLEGFVAAISPFNFTAIGGNLAGAPALMGNVVLWKPSDTAMLASYAVYRILREAGLPPNIIQFVPADGPTFGDTVTSSEHLCGINFTGSVPTFKHLWKQVAQNLDRFRTFPRLAGECGGKNFHFVHRSADVDSVVSGTLRSAFEYGGQKCSACSRLYAPRSLWPQIKGRLLEELGGIKVGNPAEDFGTFFSAVIDAKSFGRIRKWLEHARSSPSLTILAGGHCDDSVGYFVEPCIVETKDPQDPIMKEEIFGPVLAVYVYPDEEYKETLRLVDSTTSYGLTGAVFAQDKDVLREATELLRHAAGNFYINDKSTGSVVGQQPFGGARASGTNDKPGGPHYVLRWTSPQVIKETHGPLGDWRYPYMQ.

A mitochondrion-targeting transit peptide spans 1–24; it reads MLLRSAALCRALLARRGRAAGLCR. Ser44 carries the post-translational modification Phosphoserine. Lys52 bears the N6-acetyllysine mark. Lys93, Lys99, Lys114, Lys130, and Lys175 each carry N6-acetyllysine; alternate. 5 positions are modified to N6-succinyllysine; alternate: Lys93, Lys99, Lys114, Lys130, and Lys175. NAD(+) is bound by residues Ser208, Lys233, and 286–290; that span reads GSVPT. Catalysis depends on Glu314, which acts as the Proton acceptor. Lys318 bears the N6-acetyllysine mark. Lys347 is subject to N6-succinyllysine. The Nucleophile role is filled by Cys348. Residues Lys365 and Lys376 each carry the N6-acetyllysine modification. Residue Lys395 is modified to N6-succinyllysine. Glu447 is an NAD(+) binding site. Lys509 is modified (N6-acetyllysine; alternate). The residue at position 509 (Lys509) is an N6-succinyllysine; alternate. Residue Ser513 participates in substrate binding. Lys531 is subject to N6-acetyllysine.

The protein belongs to the aldehyde dehydrogenase family. As to quaternary structure, homodimer.

The protein resides in the mitochondrion matrix. It catalyses the reaction L-glutamate 5-semialdehyde + NAD(+) + H2O = L-glutamate + NADH + 2 H(+). Its pathway is amino-acid degradation; L-proline degradation into L-glutamate; L-glutamate from L-proline: step 2/2. Functionally, irreversible conversion of delta-1-pyrroline-5-carboxylate (P5C), derived either from proline or ornithine, to glutamate. This is a necessary step in the pathway interconnecting the urea and tricarboxylic acid cycles. The preferred substrate is glutamic gamma-semialdehyde, other substrates include succinic, glutaric and adipic semialdehydes. This is Delta-1-pyrroline-5-carboxylate dehydrogenase, mitochondrial (ALDH4A1) from Bos taurus (Bovine).